We begin with the raw amino-acid sequence, 169 residues long: Ribosome maturation factor RimM (169 aa).

A PRC barrel domain is found at 96-166 (EDEFYFADLI…AVVVRPVEVE (71 aa)).

Belongs to the RimM family. In terms of assembly, binds ribosomal protein uS19.

It localises to the cytoplasm. In terms of biological role, an accessory protein needed during the final step in the assembly of 30S ribosomal subunit, possibly for assembly of the head region. Essential for efficient processing of 16S rRNA. May be needed both before and after RbfA during the maturation of 16S rRNA. It has affinity for free ribosomal 30S subunits but not for 70S ribosomes. The sequence is that of Ribosome maturation factor RimM from Acidiphilium cryptum (strain JF-5).